The following is a 395-amino-acid chain: Major outer membrane protein P.IA (395 aa).

Positions 1-19 are cleaved as a signal peptide; that stretch reads MRKKLTALVLSALPLAAVA.

It belongs to the Gram-negative porin family. As to quaternary structure, homotrimer.

The protein resides in the cell outer membrane. Serves as a slightly cation selective porin. Major antigen on the gonococcal cell surface and it may have pathogenic properties in addition to its porin activity. The chain is Major outer membrane protein P.IA (porA) from Neisseria meningitidis serogroup A / serotype 4A (strain DSM 15465 / Z2491).